A 644-amino-acid chain; its full sequence is Zinc finger protein 74 (644 aa).

A KRAB domain is found at 43–114 (VSFKDVAVDF…QREVPRGPCP (72 aa)). C2H2-type zinc fingers lie at residues 248-270 (FVCGECGKAFRQSSSLTLHRRWH), 276-298 (YKCDECGKAFTWSTNLLEHRRIH), 304-326 (FFCGECGKAFSCHSSLNVHQRIH), 332-354 (YKCSACEKAFSCSSLLSMHLRVH), 360-382 (YRCGECGKAFNQRTHLTRHHRIH), 388-410 (YQCGSCGKAFTCHSSLTVHEKIH), 416-438 (FKCSDCEKAFNSRSRLTLHQRTH), 444-466 (FKCADCGKGFSCHAYLLVHRRIH), 472-494 (FKCNECGKAFSSHAYLIVHRRIH), 500-522 (FDCSQCWKAFSCHSSLIVHQRIH), 528-550 (YKCSECGRAFSQNHCLIKHQKIH), and 556-578 (FKCEKCGEMFNWSSHLTEHQRLH). A Glycyl lysine isopeptide (Lys-Gly) (interchain with G-Cter in SUMO2) cross-link involves residue Lys-582.

This sequence belongs to the krueppel C2H2-type zinc-finger protein family. As to expression, highly expressed in the fetal brain.

The protein resides in the nucleus. Its function is as follows. May play a role in RNA metabolism. This is Zinc finger protein 74 (ZNF74) from Homo sapiens (Human).